Here is a 369-residue protein sequence, read N- to C-terminus: Tetraacyldisaccharide 4'-kinase (369 aa).

Position 68 to 75 (68 to 75 (VVGGTGKT)) interacts with ATP.

This sequence belongs to the LpxK family.

The catalysed reaction is a lipid A disaccharide + ATP = a lipid IVA + ADP + H(+). It participates in glycolipid biosynthesis; lipid IV(A) biosynthesis; lipid IV(A) from (3R)-3-hydroxytetradecanoyl-[acyl-carrier-protein] and UDP-N-acetyl-alpha-D-glucosamine: step 6/6. Its function is as follows. Transfers the gamma-phosphate of ATP to the 4'-position of a tetraacyldisaccharide 1-phosphate intermediate (termed DS-1-P) to form tetraacyldisaccharide 1,4'-bis-phosphate (lipid IVA). The polypeptide is Tetraacyldisaccharide 4'-kinase (Chlamydia muridarum (strain MoPn / Nigg)).